Here is a 602-residue protein sequence, read N- to C-terminus: Protein NRT1/ PTR FAMILY 5.7 (602 aa).

2 helical membrane passes run 56–73 and 87–107; these read LSYF…TTIL and WSGV…AYLG. At Thr111 the chain carries Phosphothreonine. A run of 10 helical transmembrane segments spans residues 112-132, 152-172, 197-217, 220-240, 337-357, 381-401, 422-442, 465-485, 500-520, and 548-568; these read VLLA…SWFI, IAFF…KPSL, WWNA…VYIE, IGWG…FFIF, VKLL…GVCA, IVPP…TVTI, ILQR…IAAL, IWLA…LVGL, LGIA…NLLI, and FYWM…IVAM.

This sequence belongs to the major facilitator superfamily. Proton-dependent oligopeptide transporter (POT/PTR) (TC 2.A.17) family. Expressed in shoots, stems, leaves and flowers.

Its subcellular location is the membrane. This chain is Protein NRT1/ PTR FAMILY 5.7 (NPF5.7), found in Arabidopsis thaliana (Mouse-ear cress).